Reading from the N-terminus, the 582-residue chain is ATP-dependent lipid A-core flippase (582 aa).

5 consecutive transmembrane segments (helical) span residues 25 to 45 (AGLIVAAIALILNAASDTFML), 69 to 89 (LAVIGLMVVRGVTGFVSSYCI), 137 to 159 (ASSSSALVTVVREGASIIGLFIM), 253 to 273 (PIIQLIASFALALVLYAASFP), and 275 to 295 (VMETLTAGTITVVFSAMIALM). The ABC transmembrane type-1 domain occupies 28 to 310 (IVAAIALILN…LTNVNTQFQR (283 aa)). Residues 342–578 (IEFRHVTFYY…QGVYAQLNRM (237 aa)) form the ABC transporter domain. An ATP-binding site is contributed by 376–383 (GRSGSGKS).

This sequence belongs to the ABC transporter superfamily. Lipid exporter (TC 3.A.1.106) family. In terms of assembly, homodimer.

The protein localises to the cell inner membrane. The enzyme catalyses ATP + H2O + lipid A-core oligosaccharideSide 1 = ADP + phosphate + lipid A-core oligosaccharideSide 2.. Involved in lipopolysaccharide (LPS) biosynthesis. Translocates lipid A-core from the inner to the outer leaflet of the inner membrane. Transmembrane domains (TMD) form a pore in the inner membrane and the ATP-binding domain (NBD) is responsible for energy generation. The protein is ATP-dependent lipid A-core flippase of Yersinia pestis bv. Antiqua (strain Antiqua).